We begin with the raw amino-acid sequence, 208 residues long: Small ribosomal subunit protein uS3 (208 aa).

Residues 17–86 form the KH type-2 domain; sequence IDEYLEKELR…NPQIEVEEIK (70 aa).

It belongs to the universal ribosomal protein uS3 family. Part of the 30S ribosomal subunit.

Binds the lower part of the 30S subunit head. The polypeptide is Small ribosomal subunit protein uS3 (Thermococcus onnurineus (strain NA1)).